We begin with the raw amino-acid sequence, 135 residues long: ATP synthase epsilon chain (135 aa).

This sequence belongs to the ATPase epsilon chain family. F-type ATPases have 2 components, CF(1) - the catalytic core - and CF(0) - the membrane proton channel. CF(1) has five subunits: alpha(3), beta(3), gamma(1), delta(1), epsilon(1). CF(0) has three main subunits: a, b and c.

It is found in the cell inner membrane. In terms of biological role, produces ATP from ADP in the presence of a proton gradient across the membrane. This chain is ATP synthase epsilon chain, found in Allorhizobium ampelinum (strain ATCC BAA-846 / DSM 112012 / S4) (Agrobacterium vitis (strain S4)).